Here is a 147-residue protein sequence, read N- to C-terminus: Large ribosomal subunit protein bL9 (147 aa).

The protein belongs to the bacterial ribosomal protein bL9 family.

Binds to the 23S rRNA. The protein is Large ribosomal subunit protein bL9 of Natranaerobius thermophilus (strain ATCC BAA-1301 / DSM 18059 / JW/NM-WN-LF).